The primary structure comprises 537 residues: MSAPKLLSLGCIFFPLLLFQQARAQFPRQCATVEALRSGMCCPDLSPVSGPGTDRCGSSSGRGRCEAVTADSRPHSPQYPHDGRDDREVWPLRFFNRTCHCNGNFSGHNCGTCRPGWRGAACDQRVLIVRRNLLDLSKEEKNHFVRALDMAKRTTHPLFVIATRRSEEILGPDGNTPQFENISIYNYFVWTHYYSVKKTFLGVGQESFGEVDFSHEGPAFLTWHRYHLLRLEKDMQEMLQEPSFSLPYWNFATGKNVCDICTDDLMGSRSNFDSTLISPNSVFSQWRVVCDSLEDYDTLGTLCNSTEDGPIRRNPAGNVARPMVQRLPEPQDVAQCLEVGLFDTPPFYSNSTNSFRNTVEGYSDPTGKYDPAVRSLHNLAHLFLNGTGGQTHLSPNDPIFVLLHTFTDAVFDEWLRRYNADISTFPLENAPIGHNRQYNMVPFWPPVTNTEMFVTAPDNLGYTYEIQWPSREFSVPEIIAIAVVGALLLVALIFGTASYLIRARRSMDEANQPLLTDQYQCYAEEYEKLQNPNQSVV.

Residues 1–24 (MSAPKLLSLGCIFFPLLLFQQARA) form the signal peptide. At 25-477 (QFPRQCATVE…WPSREFSVPE (453 aa)) the chain is on the lumenal, melanosome side. Intrachain disulfides connect Cys-30/Cys-41, Cys-42/Cys-65, Cys-56/Cys-99, Cys-101/Cys-110, and Cys-113/Cys-122. 2 N-linked (GlcNAc...) asparagine glycosylation sites follow: Asn-96 and Asn-104. N-linked (GlcNAc...) asparagine glycosylation occurs at Asn-181. Zn(2+) is bound by residues His-192, His-215, and His-224. Intrachain disulfides connect Cys-258–Cys-261 and Cys-290–Cys-303. Asn-304 and Asn-350 each carry an N-linked (GlcNAc...) asparagine glycan. Zn(2+) contacts are provided by His-377 and His-381. N-linked (GlcNAc...) asparagine glycosylation is present at Asn-385. A Zn(2+)-binding site is contributed by His-404. Residues 478-501 (IIAIAVVGALLLVALIFGTASYLI) traverse the membrane as a helical segment. The Cytoplasmic segment spans residues 502–537 (RARRSMDEANQPLLTDQYQCYAEEYEKLQNPNQSVV).

The protein belongs to the tyrosinase family. In terms of assembly, monomer. Interacts with ATP7A. Interacts with SLC45A2. Requires Cu(2+) as cofactor. It depends on Zn(2+) as a cofactor. In terms of processing, glycosylated. As to expression, pigment cells.

The protein localises to the melanosome membrane. The enzyme catalyses 2 5,6-dihydroxyindole-2-carboxylate + O2 = 2 indole-5,6-quinone-2-carboxylate + 2 H2O. It functions in the pathway pigment biosynthesis; melanin biosynthesis. Its activity is regulated as follows. The activity depends critically on the nature of the bound metal ion. Catalyzes the oxidation of 5,6-dihydroxyindole-2-carboxylic acid (DHICA) in the presence of bound Cu(2+) ions, but lacks activity in the presence of bound Zn(2+) ions. Its function is as follows. Plays a role in melanin biosynthesis. Catalyzes the oxidation of 5,6-dihydroxyindole-2-carboxylic acid (DHICA) into indole-5,6-quinone-2-carboxylic acid in the presence of bound Cu(2+) ions, but not in the presence of Zn(2+). May regulate or influence the type of melanin synthesized. Also to a lower extent, capable of hydroxylating tyrosine and producing melanin. The polypeptide is 5,6-dihydroxyindole-2-carboxylic acid oxidase (Homo sapiens (Human)).